Reading from the N-terminus, the 165-residue chain is GTPase activating protein 1 (165 aa).

The 105-residue stretch at 1–105 (MLGHLVGLVK…VVKMKIEGVA (105 aa)) folds into the C2 domain. Residues R22, D23, D28, D74, K75, D76, and D81 each contribute to the Ca(2+) site.

Belongs to the plant CAR protein family. Binds to PYR/PYL/RCAR abscisic acid intracellular receptors in an ABA-independent manner, both at the plasma membrane and in the nucleus. Binds phospholipids in a Ca(2+)-dependent manner. Interacts with YchF1.

The protein resides in the cell membrane. Its subcellular location is the nucleus. The protein localises to the cytoplasm. It localises to the cytosol. In terms of biological role, mediates the transient calcium-dependent interaction of PYR/PYL/RCAR abscisic acid (ABA) receptors with the plasma membrane and thus regulates ABA sensitivity. Stimulates the GTPase/ATPase activities of YchF1, and regulates its subcellular localization. Promotes tolerance towards salinity stress by limiting the accumulation of reactive oxygen species (ROS). Promotes resistance to bacterial pathogens. This Oryza sativa subsp. indica (Rice) protein is GTPase activating protein 1.